The chain runs to 239 residues: Purine nucleoside phosphorylase DeoD-type (239 aa).

His-5 contributes to the a purine D-ribonucleoside binding site. Phosphate-binding positions include Gly-21, Arg-25, Arg-44, and 88–91 (RVGS). A purine D-ribonucleoside-binding positions include 180-182 (EME) and 204-205 (SD). Asp-205 serves as the catalytic Proton donor.

This sequence belongs to the PNP/UDP phosphorylase family. As to quaternary structure, homohexamer; trimer of homodimers.

It carries out the reaction a purine D-ribonucleoside + phosphate = a purine nucleobase + alpha-D-ribose 1-phosphate. It catalyses the reaction a purine 2'-deoxy-D-ribonucleoside + phosphate = a purine nucleobase + 2-deoxy-alpha-D-ribose 1-phosphate. Its function is as follows. Catalyzes the reversible phosphorolytic breakdown of the N-glycosidic bond in the beta-(deoxy)ribonucleoside molecules, with the formation of the corresponding free purine bases and pentose-1-phosphate. The protein is Purine nucleoside phosphorylase DeoD-type of Yersinia pestis bv. Antiqua (strain Antiqua).